We begin with the raw amino-acid sequence, 293 residues long: Ribosomal protein L11 methyltransferase (293 aa).

Positions 145, 166, 188, and 230 each coordinate S-adenosyl-L-methionine.

Belongs to the methyltransferase superfamily. PrmA family.

It is found in the cytoplasm. The catalysed reaction is L-lysyl-[protein] + 3 S-adenosyl-L-methionine = N(6),N(6),N(6)-trimethyl-L-lysyl-[protein] + 3 S-adenosyl-L-homocysteine + 3 H(+). Methylates ribosomal protein L11. This is Ribosomal protein L11 methyltransferase from Pasteurella multocida (strain Pm70).